The following is a 241-amino-acid chain: Ribonuclease PH (241 aa).

Phosphate-binding positions include Arg86 and 124–126 (GTR).

Belongs to the RNase PH family. Homohexameric ring arranged as a trimer of dimers.

The catalysed reaction is tRNA(n+1) + phosphate = tRNA(n) + a ribonucleoside 5'-diphosphate. Functionally, phosphorolytic 3'-5' exoribonuclease that plays an important role in tRNA 3'-end maturation. Removes nucleotide residues following the 3'-CCA terminus of tRNAs; can also add nucleotides to the ends of RNA molecules by using nucleoside diphosphates as substrates, but this may not be physiologically important. Probably plays a role in initiation of 16S rRNA degradation (leading to ribosome degradation) during starvation. This is Ribonuclease PH from Hamiltonella defensa subsp. Acyrthosiphon pisum (strain 5AT).